Reading from the N-terminus, the 916-residue chain is Calcium homeostasis endoplasmic reticulum protein (916 aa).

Met-1 is subject to N-acetylmethionine. The SURP motif repeat unit spans residues 15–57 (VIDKLAQFVARNGPEFEKMTMEKQKDNPKFSFLFGGEFYSYYK). Lys-18 is subject to N6-acetyllysine. The region spanning 149 to 289 (ETQLDMNEFD…QLQSPALGLG (141 aa)) is the CID domain. 2 disordered regions span residues 336 to 549 (QQQQ…RFPP) and 601 to 635 (HPPWAGPQHPDFGPPPHGFNGQPPHMRRQGPPHIN). Residues 354 to 374 (TPPPPAPPPAPAPAPAIPPTT) are compositionally biased toward pro residues. A compositionally biased stretch (polar residues) spans 480-501 (WNNQPDAAWNSQFEGPWNSQHE). Residues 525–541 (PFPPHQQHPQFNQPPHP) show a composition bias toward pro residues. Phosphotyrosine is present on Tyr-714. The interval 722–878 (RARRRKGQEK…DPIKGGDVRD (157 aa)) is disordered. The span at 739 to 749 (SRSRSKSRGRS) shows a compositional bias: basic residues. Residues 750 to 766 (SSRSNSRSSKSSGSYSR) show a composition bias toward low complexity. The segment covering 767-815 (SRSRSCSRSYSRSRSRSRSRSRSSRSRSRSQSRSRSKSYSPGRRRRSRS) has biased composition (basic residues). Ser-813, Ser-815, and Ser-817 each carry phosphoserine. Position 819 is a phosphothreonine (Thr-819). Ser-828 bears the Phosphoserine mark. Positions 841–891 (EENKGHQMLVKMGWSGSGGLGAKEQGIQDPIKGGDVRDKWDQYKGVGVALD) constitute a G-patch domain. Residue Lys-844 forms a Glycyl lysine isopeptide (Lys-Gly) (interchain with G-Cter in SUMO2) linkage. A phosphoserine mark is found at Ser-855 and Ser-857. Lys-872 participates in a covalent cross-link: Glycyl lysine isopeptide (Lys-Gly) (interchain with G-Cter in SUMO2). Lys-879 carries the N6-acetyllysine modification. Position 904 is a phosphoserine (Ser-904).

As to expression, expressed in brain, placenta, lung, liver, kidney, pancreas, cardiac and skeletal muscle, and in cultured HEL and Dami cells.

The protein localises to the cytoplasm. Its subcellular location is the perinuclear region. It is found in the endoplasmic reticulum. In terms of biological role, involved in calcium homeostasis, growth and proliferation. The protein is Calcium homeostasis endoplasmic reticulum protein of Homo sapiens (Human).